We begin with the raw amino-acid sequence, 528 residues long: Glutamyl-tRNA(Gln) amidotransferase subunit A, mitochondrial (528 aa).

K76 serves as the catalytic Charge relay system. A disordered region spans residues 147-166 (QYREKRKQNPHSKNEDSDWL). The active-site Charge relay system is S171. S195 acts as the Acyl-ester intermediate in catalysis.

Belongs to the amidase family. GatA subfamily. As to quaternary structure, subunit of the heterotrimeric GatCAB amidotransferase (AdT) complex, composed of A (QRSL1), B (GATB) and C (GATC) subunits.

It localises to the mitochondrion. The catalysed reaction is L-glutamyl-tRNA(Gln) + L-glutamine + ATP + H2O = L-glutaminyl-tRNA(Gln) + L-glutamate + ADP + phosphate + H(+). Its function is as follows. Allows the formation of correctly charged Gln-tRNA(Gln) through the transamidation of misacylated Glu-tRNA(Gln) in the mitochondria. The reaction takes place in the presence of glutamine and ATP through an activated gamma-phospho-Glu-tRNA(Gln). The chain is Glutamyl-tRNA(Gln) amidotransferase subunit A, mitochondrial from Macaca fascicularis (Crab-eating macaque).